The chain runs to 209 residues: Ribosomal RNA small subunit methyltransferase G (209 aa).

S-adenosyl-L-methionine-binding positions include Gly75, Leu80, 126–127, and Arg141; that span reads VE.

The protein belongs to the methyltransferase superfamily. RNA methyltransferase RsmG family.

The protein localises to the cytoplasm. It catalyses the reaction guanosine(527) in 16S rRNA + S-adenosyl-L-methionine = N(7)-methylguanosine(527) in 16S rRNA + S-adenosyl-L-homocysteine. Specifically methylates the N7 position of guanine in position 527 of 16S rRNA. This is Ribosomal RNA small subunit methyltransferase G from Colwellia psychrerythraea (strain 34H / ATCC BAA-681) (Vibrio psychroerythus).